Reading from the N-terminus, the 285-residue chain is RNA 5'-monophosphate methyltransferase (285 aa).

The tract at residues 1–28 (MAATQELSKGGVEEAVEEDDPAALKPGA) is disordered. Residues arginine 46, asparagine 77, aspartate 111, 136–137 (DI), and methionine 165 contribute to the S-adenosyl-L-methionine site. Positions 53-275 (ELLRQLFPPE…KHTEETQAIP (223 aa)) constitute a Bin3-type SAM domain.

It belongs to the methyltransferase superfamily. In terms of assembly, interacts with DICER1; the interaction may be mediated by RNA.

Its subcellular location is the cytoplasm. The enzyme catalyses a 5'-end 5'-phospho-ribonucleoside-RNA + S-adenosyl-L-methionine = a 5'-end (5'-methylphospho)-ribonucleoside-RNA + S-adenosyl-L-homocysteine. It catalyses the reaction a 5'-end 5'-phospho-ribonucleoside-RNA + 2 S-adenosyl-L-methionine = a 5'-end (5'-bismethylphospho)-ribonucleoside-RNA + 2 S-adenosyl-L-homocysteine. O-methyltransferase that specifically monomethylates 5'-monophosphate of cytoplasmic histidyl tRNA (tRNA(His)), acting as a capping enzyme by protecting tRNA(His) from cleavage by DICER1. Also able, with less efficiently, to methylate the 5' monophosphate of a subset of pre-miRNAs, acting as a negative regulator of miRNA processing. The 5' monophosphate of pre-miRNAs is recognized by DICER1 and is required for pre-miRNAs processing: methylation at this position reduces the processing of pre-miRNAs by DICER1. Was also reported to mediate dimethylation of pre-miR-145; however dimethylation cannot be reproduced by another group which observes a monomethylation of pre-miR-145. This is RNA 5'-monophosphate methyltransferase from Rattus norvegicus (Rat).